Here is a 462-residue protein sequence, read N- to C-terminus: 3-isopropylmalate dehydratase large subunit (462 aa).

Residues Cys337, Cys397, and Cys400 each coordinate [4Fe-4S] cluster.

This sequence belongs to the aconitase/IPM isomerase family. LeuC type 1 subfamily. As to quaternary structure, heterodimer of LeuC and LeuD. [4Fe-4S] cluster is required as a cofactor.

The catalysed reaction is (2R,3S)-3-isopropylmalate = (2S)-2-isopropylmalate. It functions in the pathway amino-acid biosynthesis; L-leucine biosynthesis; L-leucine from 3-methyl-2-oxobutanoate: step 2/4. Functionally, catalyzes the isomerization between 2-isopropylmalate and 3-isopropylmalate, via the formation of 2-isopropylmaleate. The sequence is that of 3-isopropylmalate dehydratase large subunit from Listeria monocytogenes serotype 4b (strain CLIP80459).